A 787-amino-acid polypeptide reads, in one-letter code: Serine/threonine-protein kinase PLK4 (787 aa).

In terms of domain architecture, Protein kinase spans 14 to 268 (YEVQHLLGKG…LEQVLRHPFM (255 aa)). ATP is bound by residues 20-28 (LGKGGFASV) and Lys43. Asp139 acts as the Proton acceptor in catalysis. A disordered region spans residues 311–336 (SNESRSSQRLRSIEKSAQSSSNPQML). The 120-residue stretch at 386 to 505 (EQQMRVPPLN…ARFVGLVKSK (120 aa)) folds into the Cryptic POLO box 1 (CPB1) domain. In terms of domain architecture, Cryptic POLO box 2 (CPB2) spans 506 to 613 (TPKITYFSSL…GRRPLTDVSH (108 aa)). Positions 675–755 (PIKRINIPDV…IPQVKLRLKC (81 aa)) constitute a POLO box domain.

The protein belongs to the protein kinase superfamily. Ser/Thr protein kinase family. CDC5/Polo subfamily. In terms of assembly, homodimer. Ubiquitinated by the SCF(Slimb) ubiquitin ligase complex; leading to its degradation by the proteasome during interphase and regulating centriole number and ensuring the block to centriole reduplication.

It is found in the cytoplasm. Its subcellular location is the cytoskeleton. The protein resides in the microtubule organizing center. It localises to the centrosome. The protein localises to the centriole. It catalyses the reaction L-seryl-[protein] + ATP = O-phospho-L-seryl-[protein] + ADP + H(+). The enzyme catalyses L-threonyl-[protein] + ATP = O-phospho-L-threonyl-[protein] + ADP + H(+). Serine/threonine-protein kinase that plays a central role in centriole duplication. Able to trigger procentriole formation on the surface of the mother centriole cylinder, using mother centriole as a platform, leading to the recruitment of centriole biogenesis proteins such as sas-6. When overexpressed, it is able to induce centrosome amplification through the simultaneous generation of multiple procentrioles adjoining each parental centriole during S phase. Centrosome amplification following overexpression can initiate tumorigenesis, highlighting the importance of centrosome regulation in cancers. This Drosophila willistoni (Fruit fly) protein is Serine/threonine-protein kinase PLK4 (SAK).